A 112-amino-acid chain; its full sequence is UPF0060 membrane protein Arth_4238 (112 aa).

A run of 4 helical transmembrane segments spans residues 7 to 27 (ILLFVLAAAAEIGGAWLVWQA), 33 to 53 (EWWWAGLGVLALGVYGFAATL), 62 to 82 (ILAAYGGVFVAGSLAWGMVFD), and 88 to 108 (RWDIIGSVICLLGVAVIMFAP).

It belongs to the UPF0060 family.

It is found in the cell membrane. This is UPF0060 membrane protein Arth_4238 from Arthrobacter sp. (strain FB24).